Here is a 399-residue protein sequence, read N- to C-terminus: 4-hydroxy-3-methylbut-2-enyl diphosphate reductase (399 aa).

C66 is a [4Fe-4S] cluster binding site. H96 contributes to the (2E)-4-hydroxy-3-methylbut-2-enyl diphosphate binding site. Position 96 (H96) interacts with dimethylallyl diphosphate. H96 provides a ligand contact to isopentenyl diphosphate. Residue C157 coordinates [4Fe-4S] cluster. A (2E)-4-hydroxy-3-methylbut-2-enyl diphosphate-binding site is contributed by H185. H185 contributes to the dimethylallyl diphosphate binding site. H185 is an isopentenyl diphosphate binding site. The active-site Proton donor is E187. (2E)-4-hydroxy-3-methylbut-2-enyl diphosphate is bound at residue T250. Position 288 (C288) interacts with [4Fe-4S] cluster. (2E)-4-hydroxy-3-methylbut-2-enyl diphosphate-binding residues include S317, S318, N319, and S380. 4 residues coordinate dimethylallyl diphosphate: S317, S318, N319, and S380. The isopentenyl diphosphate site is built by S317, S318, N319, and S380.

The protein belongs to the IspH family. [4Fe-4S] cluster serves as cofactor.

It carries out the reaction isopentenyl diphosphate + 2 oxidized [2Fe-2S]-[ferredoxin] + H2O = (2E)-4-hydroxy-3-methylbut-2-enyl diphosphate + 2 reduced [2Fe-2S]-[ferredoxin] + 2 H(+). The catalysed reaction is dimethylallyl diphosphate + 2 oxidized [2Fe-2S]-[ferredoxin] + H2O = (2E)-4-hydroxy-3-methylbut-2-enyl diphosphate + 2 reduced [2Fe-2S]-[ferredoxin] + 2 H(+). It participates in isoprenoid biosynthesis; dimethylallyl diphosphate biosynthesis; dimethylallyl diphosphate from (2E)-4-hydroxy-3-methylbutenyl diphosphate: step 1/1. It functions in the pathway isoprenoid biosynthesis; isopentenyl diphosphate biosynthesis via DXP pathway; isopentenyl diphosphate from 1-deoxy-D-xylulose 5-phosphate: step 6/6. In terms of biological role, catalyzes the conversion of 1-hydroxy-2-methyl-2-(E)-butenyl 4-diphosphate (HMBPP) into a mixture of isopentenyl diphosphate (IPP) and dimethylallyl diphosphate (DMAPP). Acts in the terminal step of the DOXP/MEP pathway for isoprenoid precursor biosynthesis. The sequence is that of 4-hydroxy-3-methylbut-2-enyl diphosphate reductase from Synechococcus sp. (strain CC9902).